A 226-amino-acid polypeptide reads, in one-letter code: N-(5'-phosphoribosyl)anthranilate isomerase (226 aa).

The protein belongs to the TrpF family.

It carries out the reaction N-(5-phospho-beta-D-ribosyl)anthranilate = 1-(2-carboxyphenylamino)-1-deoxy-D-ribulose 5-phosphate. It functions in the pathway amino-acid biosynthesis; L-tryptophan biosynthesis; L-tryptophan from chorismate: step 3/5. This is N-(5'-phosphoribosyl)anthranilate isomerase (TRP1) from Candida albicans (strain SC5314 / ATCC MYA-2876) (Yeast).